Here is a 588-residue protein sequence, read N- to C-terminus: MEFSILADSFNKMESTRKRLELTQYLVELFKKTPQEVISKIVYLLQGKLRPDFEGVELGVAEKLAIRAISKSSGIPIKKIEEEYRKGGDLGHAATTILEQKTQTTFLVEDITVERVYETLFKIAKLEGNRSQDMKMKYISSLLNDASPLEASFILKILLGTLRLGIAENTVMDALALAFSGNKENRKILEHAYNVSSDLGKVAEVLATEGLAEVEKFKIILFNPIRPMLADRVKSEQEAIEKMGNEFAAEYKLDGERVQLHIEGDKVVLFSRSLENISSYYPDIIEKIPKTIQAENIVLEAEAVAINENTGEFLPFQELMHRRRKYKIEKAVTQYPITVNLFDILYCNGKSCLELDYKERREKMEKVVKEDDFVKHIPMAIVKNENDIEDFFENSINAGSEGLMLKTLVSPYQAGSRGSHWLKLKREYQNELGDSLDLVVIGGFFGKGRRTGNYGTLLLATYEEDEDTFTSICKVGTGFSDEDLDQLYQILNPKVTIKKNPRINSEMEADVWFEPELVIEVVASEITLSPIHKAARDKIRKGAGLALRFPKFTGKMRVEKMAEDASTNEEVITLYQGQKKVAHDKSLM.

E250 contacts ATP. Catalysis depends on K252, which acts as the N6-AMP-lysine intermediate. R257, R272, E302, F342, R417, and K423 together coordinate ATP.

The protein belongs to the ATP-dependent DNA ligase family. It depends on Mg(2+) as a cofactor.

The catalysed reaction is ATP + (deoxyribonucleotide)n-3'-hydroxyl + 5'-phospho-(deoxyribonucleotide)m = (deoxyribonucleotide)n+m + AMP + diphosphate.. Functionally, DNA ligase that seals nicks in double-stranded DNA during DNA replication, DNA recombination and DNA repair. This chain is DNA ligase, found in Nitrosopumilus maritimus (strain SCM1).